The sequence spans 469 residues: Putative multidrug resistance protein MdtD (469 aa).

The next 13 helical transmembrane spans lie at Leu8 to Ala28, Ser45 to Ala65, Val68 to Cys88, Val102 to Ile122, Phe134 to Val154, Trp161 to Met181, Phe191 to Asp211, Gly215 to Ala235, Leu263 to Phe283, Ile286 to Ser306, Leu338 to Phe358, Met392 to Phe412, and Ser426 to Phe446.

It belongs to the major facilitator superfamily. TCR/Tet family.

It localises to the cell inner membrane. The sequence is that of Putative multidrug resistance protein MdtD from Yersinia enterocolitica serotype O:8 / biotype 1B (strain NCTC 13174 / 8081).